Here is a 123-residue protein sequence, read N- to C-terminus: Large ribosomal subunit protein uL14 (123 aa).

It belongs to the universal ribosomal protein uL14 family. In terms of assembly, part of the 50S ribosomal subunit. Forms a cluster with proteins L3 and L19. In the 70S ribosome, L14 and L19 interact and together make contacts with the 16S rRNA in bridges B5 and B8.

Functionally, binds to 23S rRNA. Forms part of two intersubunit bridges in the 70S ribosome. This Wigglesworthia glossinidia brevipalpis protein is Large ribosomal subunit protein uL14.